The sequence spans 153 residues: MTHDNKLQVEAIKRGTVIDHIPAQVGFKLLTLFKLTETDQRITIGLNLPSGEMGRKDLIKIENTFLTDEQVNQLSLYAPQATVNRIDDYEVVGKSRPSLPDRIDSVLVCPNSNCISHAEPVSSSFAVKKRADDIALKCKYCEKEFSHYVVLAN.

The Zn(2+) site is built by Cys109, Cys114, Cys138, and Cys141.

It belongs to the PyrI family. As to quaternary structure, contains catalytic and regulatory chains. It depends on Zn(2+) as a cofactor.

Functionally, involved in allosteric regulation of aspartate carbamoyltransferase. This is Aspartate carbamoyltransferase regulatory chain from Klebsiella pneumoniae subsp. pneumoniae (strain ATCC 700721 / MGH 78578).